The chain runs to 412 residues: Probable serine/threonine-protein kinase PBL10 (412 aa).

Residue G2 is the site of N-myristoyl glycine attachment. C4 carries S-palmitoyl cysteine lipidation. Residues 15–45 (GASPKYMSSEANDSLGSKSSSVSIRTNPRTE) form a disordered region. Residues 23-43 (SEANDSLGSKSSSVSIRTNPR) show a composition bias toward polar residues. The residue at position 58 (T58) is a Phosphothreonine. The 288-residue stretch at 69-356 (FRPDSVLGEG…VVSHLEHIQT (288 aa)) folds into the Protein kinase domain. ATP-binding positions include 75–83 (LGEGGFGSV) and K107. Position 152 is a phosphotyrosine (Y152). Residue D204 is the Proton acceptor of the active site. S208 and S238 each carry phosphoserine. T239 and T244 each carry phosphothreonine. Y252 is subject to Phosphotyrosine.

Belongs to the protein kinase superfamily. Ser/Thr protein kinase family. Interacts with the Xanthomonas campestris effector XopAC/AvrAC. In terms of tissue distribution, expressed in stomatal guard cells of leaves.

Its subcellular location is the cell membrane. It carries out the reaction L-seryl-[protein] + ATP = O-phospho-L-seryl-[protein] + ADP + H(+). It catalyses the reaction L-threonyl-[protein] + ATP = O-phospho-L-threonyl-[protein] + ADP + H(+). In terms of biological role, possible bi-functional kinase. In vitro, it exhibits serine/threonine activity. In vivo, can phosphorylate tyrosine residues of limited substrates. May be involved in plant defense signaling. Required for full light-induced stomatal opening. This Arabidopsis thaliana (Mouse-ear cress) protein is Probable serine/threonine-protein kinase PBL10.